The sequence spans 180 residues: DNA-directed RNA polymerase subunit omega (180 aa).

The disordered stretch occupies residues 100 to 180; the sequence is ISKSGTPILP…NSDDSETTNS (81 aa). Composition is skewed to acidic residues over residues 137–151 and 159–180; these read EVDV…DEET and AEAE…TTNS.

This sequence belongs to the RNA polymerase subunit omega family. As to quaternary structure, the RNAP catalytic core consists of 2 alpha, 1 beta, 1 beta' and 1 omega subunit. When a sigma factor is associated with the core the holoenzyme is formed, which can initiate transcription.

The catalysed reaction is RNA(n) + a ribonucleoside 5'-triphosphate = RNA(n+1) + diphosphate. In terms of biological role, promotes RNA polymerase assembly. Latches the N- and C-terminal regions of the beta' subunit thereby facilitating its interaction with the beta and alpha subunits. This Pelagibacter ubique (strain HTCC1062) protein is DNA-directed RNA polymerase subunit omega.